Here is a 347-residue protein sequence, read N- to C-terminus: Quinolinate synthase (347 aa).

Iminosuccinate is bound by residues histidine 47 and serine 68. Cysteine 113 is a binding site for [4Fe-4S] cluster. Residues 139–141 (YAN) and serine 156 each bind iminosuccinate. [4Fe-4S] cluster is bound at residue cysteine 200. Iminosuccinate is bound by residues 226 to 228 (HPE) and threonine 243. Cysteine 297 contacts [4Fe-4S] cluster.

It belongs to the quinolinate synthase family. Type 1 subfamily. It depends on [4Fe-4S] cluster as a cofactor.

The protein resides in the cytoplasm. It catalyses the reaction iminosuccinate + dihydroxyacetone phosphate = quinolinate + phosphate + 2 H2O + H(+). The protein operates within cofactor biosynthesis; NAD(+) biosynthesis; quinolinate from iminoaspartate: step 1/1. In terms of biological role, catalyzes the condensation of iminoaspartate with dihydroxyacetone phosphate to form quinolinate. This chain is Quinolinate synthase, found in Escherichia coli (strain K12 / MC4100 / BW2952).